The sequence spans 65 residues: Large ribosomal subunit protein bL35 (65 aa).

A compositionally biased stretch (basic residues) spans 1–16 (MPKQKTHRASAKRFKR). The disordered stretch occupies residues 1-20 (MPKQKTHRASAKRFKRTGSG).

The protein belongs to the bacterial ribosomal protein bL35 family.

This Streptococcus equi subsp. equi (strain 4047) protein is Large ribosomal subunit protein bL35.